A 148-amino-acid chain; its full sequence is MPTFKLVLSDPISGKARQFEIKDPLAQRFIGLKIGDELDGSVLKDFLELPKGAKIRITGGSGIEGAPMHPGVPGPVKRYILADGPPGYWPPKRGMRKRKLVRGNTISDSIVQINAVIVYPQGYSGPPAIPLGAKEIEKLTKAKEGTPA.

This sequence belongs to the eukaryotic ribosomal protein eS6 family.

This is Small ribosomal subunit protein eS6 from Pyrobaculum islandicum (strain DSM 4184 / JCM 9189 / GEO3).